The following is a 787-amino-acid chain: Vacuolar protein sorting-associated protein 35A (787 aa).

Methionine 1 carries the N-acetylmethionine modification.

It belongs to the VPS35 family. Component of the retromer complex which consists of VPS29 (MAG1), VPS26 (VPS26A or VPS26B), VPS35 (VPS35A or VPS35B or VPS35C), VPS5/17 (SNX1 or SNX2A or SNX2B). Component of a retromer subcomplex consisting of VPS29 (MAG1), VPS26 (VPS26A or VPS26B), VPS35 (VPS35A or VPS35B or VPS35C). Interacts with RABG3F.

The protein resides in the cytoplasm. It is found in the endosome membrane. The protein localises to the prevacuolar compartment membrane. Its subcellular location is the golgi apparatus. It localises to the trans-Golgi network membrane. In terms of biological role, plays a role in vesicular protein sorting. Component of the membrane-associated retromer complex which is essential in endosome-to-Golgi retrograde transport. Also involved in the efficient sorting of seed storage proteins. Binds alone to endosomal membranes and is required for recruitment of VPS26 and VPS29 to membrane. The VPS29-VPS26-VPS35 subcomplex may be involved in recycling of specific cargos from endosome to the plasma membrane. The chain is Vacuolar protein sorting-associated protein 35A (VPS35A) from Arabidopsis thaliana (Mouse-ear cress).